A 266-amino-acid polypeptide reads, in one-letter code: tRNA (guanine-N(7)-)-methyltransferase (266 aa).

A disordered region spans residues 1 to 32; sequence MSDHGRMHIPESGLATPAAAHSDDPPHPHFNR. Residues Glu96, Glu121, Asp148, and Asp171 each coordinate S-adenosyl-L-methionine. Asp171 is an active-site residue. Positions 175 and 207 each coordinate substrate.

Belongs to the class I-like SAM-binding methyltransferase superfamily. TrmB family.

The enzyme catalyses guanosine(46) in tRNA + S-adenosyl-L-methionine = N(7)-methylguanosine(46) in tRNA + S-adenosyl-L-homocysteine. Its pathway is tRNA modification; N(7)-methylguanine-tRNA biosynthesis. Its function is as follows. Catalyzes the formation of N(7)-methylguanine at position 46 (m7G46) in tRNA. This Mycolicibacterium vanbaalenii (strain DSM 7251 / JCM 13017 / BCRC 16820 / KCTC 9966 / NRRL B-24157 / PYR-1) (Mycobacterium vanbaalenii) protein is tRNA (guanine-N(7)-)-methyltransferase.